The chain runs to 131 residues: Profilin-5 (131 aa).

It belongs to the profilin family. In terms of assembly, occurs in many kinds of cells as a complex with monomeric actin in a 1:1 ratio.

The protein localises to the cytoplasm. Its subcellular location is the cytoskeleton. In terms of biological role, binds to actin and affects the structure of the cytoskeleton. At high concentrations, profilin prevents the polymerization of actin, whereas it enhances it at low concentrations. By binding to PIP2, it inhibits the formation of IP3 and DG. The sequence is that of Profilin-5 from Hevea brasiliensis (Para rubber tree).